The sequence spans 146 residues: MRVVVQRAKDAKVTVAGEVVGEIDFGLVLLVGITHDDTEEDAAFVADKIAHLRIFEDEHGKMNVSLIDVGGAILSISQFTLYGDCRKGRRPNFMDAAKPEHAKHIYEAFNEQLRQKGIRVETGVFGAMMDVMLTNVGPVTLIVESK.

The Gly-cisPro motif, important for rejection of L-amino acids motif lies at 137-138; the sequence is GP.

The protein belongs to the DTD family. Homodimer.

Its subcellular location is the cytoplasm. It catalyses the reaction glycyl-tRNA(Ala) + H2O = tRNA(Ala) + glycine + H(+). The enzyme catalyses a D-aminoacyl-tRNA + H2O = a tRNA + a D-alpha-amino acid + H(+). An aminoacyl-tRNA editing enzyme that deacylates mischarged D-aminoacyl-tRNAs. Also deacylates mischarged glycyl-tRNA(Ala), protecting cells against glycine mischarging by AlaRS. Acts via tRNA-based rather than protein-based catalysis; rejects L-amino acids rather than detecting D-amino acids in the active site. By recycling D-aminoacyl-tRNA to D-amino acids and free tRNA molecules, this enzyme counteracts the toxicity associated with the formation of D-aminoacyl-tRNA entities in vivo and helps enforce protein L-homochirality. This chain is D-aminoacyl-tRNA deacylase, found in Anoxybacillus flavithermus (strain DSM 21510 / WK1).